Reading from the N-terminus, the 302-residue chain is tRNA dimethylallyltransferase (302 aa).

9-16 is a binding site for ATP; it reads GPTAAGKS. Residue 11-16 participates in substrate binding; that stretch reads TAAGKS. The tract at residues 34 to 37 is interaction with substrate tRNA; the sequence is DSRQ.

This sequence belongs to the IPP transferase family. In terms of assembly, monomer. It depends on Mg(2+) as a cofactor.

The catalysed reaction is adenosine(37) in tRNA + dimethylallyl diphosphate = N(6)-dimethylallyladenosine(37) in tRNA + diphosphate. In terms of biological role, catalyzes the transfer of a dimethylallyl group onto the adenine at position 37 in tRNAs that read codons beginning with uridine, leading to the formation of N6-(dimethylallyl)adenosine (i(6)A). This is tRNA dimethylallyltransferase from Gloeobacter violaceus (strain ATCC 29082 / PCC 7421).